The sequence spans 336 residues: N-acetyl-gamma-glutamyl-phosphate reductase (336 aa).

Cys-148 is a catalytic residue.

This sequence belongs to the NAGSA dehydrogenase family. Type 1 subfamily.

Its subcellular location is the cytoplasm. It carries out the reaction N-acetyl-L-glutamate 5-semialdehyde + phosphate + NADP(+) = N-acetyl-L-glutamyl 5-phosphate + NADPH + H(+). It functions in the pathway amino-acid biosynthesis; L-arginine biosynthesis; N(2)-acetyl-L-ornithine from L-glutamate: step 3/4. In terms of biological role, catalyzes the NADPH-dependent reduction of N-acetyl-5-glutamyl phosphate to yield N-acetyl-L-glutamate 5-semialdehyde. This Campylobacter curvus (strain 525.92) protein is N-acetyl-gamma-glutamyl-phosphate reductase.